Reading from the N-terminus, the 301-residue chain is UDP-N-acetylenolpyruvoylglucosamine reductase (301 aa).

Residues valine 30 to glycine 194 enclose the FAD-binding PCMH-type domain. The active site involves arginine 173. Residue serine 223 is the Proton donor of the active site. The active site involves glutamate 293.

The protein belongs to the MurB family. FAD serves as cofactor.

Its subcellular location is the cytoplasm. It carries out the reaction UDP-N-acetyl-alpha-D-muramate + NADP(+) = UDP-N-acetyl-3-O-(1-carboxyvinyl)-alpha-D-glucosamine + NADPH + H(+). It participates in cell wall biogenesis; peptidoglycan biosynthesis. Its function is as follows. Cell wall formation. The sequence is that of UDP-N-acetylenolpyruvoylglucosamine reductase from Streptococcus pneumoniae (strain 70585).